A 73-amino-acid chain; its full sequence is U-scoloptoxin(22)-Cw1a (73 aa).

Residues 1-24 (MRRFVFLAFVLVLFVIANLDSSSA) form the signal peptide.

This sequence belongs to the scoloptoxin-22 family. Contains 1 disulfide bond. In terms of tissue distribution, expressed by the venom gland.

The protein localises to the secreted. This chain is U-scoloptoxin(22)-Cw1a, found in Cormocephalus westwoodi (Westwood's green centipede).